The chain runs to 258 residues: Acyl-[acyl-carrier-protein]--UDP-N-acetylglucosamine O-acyltransferase (258 aa).

It belongs to the transferase hexapeptide repeat family. LpxA subfamily. Homotrimer.

Its subcellular location is the cytoplasm. The enzyme catalyses a (3R)-hydroxyacyl-[ACP] + UDP-N-acetyl-alpha-D-glucosamine = a UDP-3-O-[(3R)-3-hydroxyacyl]-N-acetyl-alpha-D-glucosamine + holo-[ACP]. The protein operates within glycolipid biosynthesis; lipid IV(A) biosynthesis; lipid IV(A) from (3R)-3-hydroxytetradecanoyl-[acyl-carrier-protein] and UDP-N-acetyl-alpha-D-glucosamine: step 1/6. Functionally, involved in the biosynthesis of lipid A, a phosphorylated glycolipid that anchors the lipopolysaccharide to the outer membrane of the cell. This Halorhodospira halophila (strain DSM 244 / SL1) (Ectothiorhodospira halophila (strain DSM 244 / SL1)) protein is Acyl-[acyl-carrier-protein]--UDP-N-acetylglucosamine O-acyltransferase.